We begin with the raw amino-acid sequence, 137 residues long: Nucleoside diphosphate kinase (137 aa).

ATP contacts are provided by lysine 9, phenylalanine 57, arginine 85, threonine 91, arginine 102, and asparagine 112. Residue histidine 115 is the Pros-phosphohistidine intermediate of the active site.

This sequence belongs to the NDK family. As to quaternary structure, homotetramer. Requires Mg(2+) as cofactor.

The protein resides in the cytoplasm. The enzyme catalyses a 2'-deoxyribonucleoside 5'-diphosphate + ATP = a 2'-deoxyribonucleoside 5'-triphosphate + ADP. The catalysed reaction is a ribonucleoside 5'-diphosphate + ATP = a ribonucleoside 5'-triphosphate + ADP. Functionally, major role in the synthesis of nucleoside triphosphates other than ATP. The ATP gamma phosphate is transferred to the NDP beta phosphate via a ping-pong mechanism, using a phosphorylated active-site intermediate. This is Nucleoside diphosphate kinase from Geobacter sp. (strain M21).